The following is a 39-amino-acid chain: Anthranilate phosphoribosyltransferase (39 aa).

Belongs to the anthranilate phosphoribosyltransferase family. Homodimer.

The catalysed reaction is N-(5-phospho-beta-D-ribosyl)anthranilate + diphosphate = 5-phospho-alpha-D-ribose 1-diphosphate + anthranilate. It functions in the pathway amino-acid biosynthesis; L-tryptophan biosynthesis; L-tryptophan from chorismate: step 2/5. In terms of biological role, catalyzes the transfer of the phosphoribosyl group of 5-phosphorylribose-1-pyrophosphate (PRPP) to anthranilate to yield N-(5'-phosphoribosyl)-anthranilate (PRA). The chain is Anthranilate phosphoribosyltransferase (trpD) from Pectobacterium carotovorum (Erwinia carotovora).